Reading from the N-terminus, the 241-residue chain is MGLELYLDLMSQPCRAVYIFAKKNGIPFQLRTIELLKGQQYTDSFAQVNPLRKVPALKDGDFVLAESVAILLYLSRKYKAPDHWYPQDLQTRARVDEYLAWQHTALRSCCTRAMWQKMMFPVFLGQPVPPEMLASTLAELDGCLQVLEDKFLRNQAFLTGSHISVADLVAITELMHPVSAGCKIFESRPKLAAWRQRVEAEVGESLFQEAHEVVLKAKDMPPLMDPALKEKLKLSVQCLLH.

In terms of domain architecture, GST N-terminal spans 2–82 (GLELYLDLMS…YLSRKYKAPD (81 aa)). Glutathione is bound by residues 53–54 (KV) and 66–67 (ES). The GST C-terminal domain occupies 88–222 (DLQTRARVDE…VVLKAKDMPP (135 aa)).

This sequence belongs to the GST superfamily. Theta family. As to quaternary structure, homodimer. As to expression, expressed strongly in liver, and at lower levels in kidney and testis.

The protein resides in the cytoplasm. The enzyme catalyses RX + glutathione = an S-substituted glutathione + a halide anion + H(+). Functionally, conjugation of reduced glutathione to a wide number of exogenous and endogenous hydrophobic electrophiles. Shows high activity towards 4-nitrobenzyl chloride (4-NBC). Also has lower activity towards 1,2-epoxy-3-(p-nitrophenoxy)propane (EPNP), cumene hydroperoxide, 1-chloro-2,4-dinitrobenzene (CDNB), 7-chloro-4-nitrobenzo-2-oxa-1,3-diazole (NBD-Cl), and ethacrynic acid. In Mus musculus (Mouse), this protein is Glutathione S-transferase theta-3.